Reading from the N-terminus, the 153-residue chain is Small ribosomal subunit protein uS11 (153 aa).

The protein belongs to the universal ribosomal protein uS11 family.

In Chlamydomonas reinhardtii (Chlamydomonas smithii), this protein is Small ribosomal subunit protein uS11 (RPS14).